The following is an 89-amino-acid chain: Dynein light chain 2, cytoplasmic (89 aa).

The protein belongs to the dynein light chain family. Homodimer. The cytoplasmic dynein 1 complex consists of two catalytic heavy chains (HCs) and a number of non-catalytic subunits which present intermediate chains (ICs), light intermediate chains (LICs) and light chains (LCs); the composition seems to vary in respect to the IC, LIC and LC composition. The heavy chain homodimer serves as a scaffold for the probable homodimeric assembly of the respective non-catalytic subunits. Dynein ICs and LICs bind directly to the HC dimer and the LCs assemble on the IC dimer. Interacts with DYNC1I1. Interacts with BMF. Component of the myosin V motor complex. Interacts with BCAS1. Interacts with Basson/BSN. Interacts with AMBRA1 (via TQT motifs); tethering AMBRA1 to the cytoskeleton. Interacts with IQUB.

The protein localises to the cytoplasm. Its subcellular location is the cytoskeleton. Its function is as follows. Acts as one of several non-catalytic accessory components of the cytoplasmic dynein 1 complex that are thought to be involved in linking dynein to cargos and to adapter proteins that regulate dynein function. Cytoplasmic dynein 1 acts as a motor for the intracellular retrograde motility of vesicles and organelles along microtubules. May play a role in changing or maintaining the spatial distribution of cytoskeletal structures. The polypeptide is Dynein light chain 2, cytoplasmic (DYNLL2) (Homo sapiens (Human)).